The following is a 218-amino-acid chain: Small ribosomal subunit protein uS3c (218 aa).

A KH type-2 domain is found at 43–118 (IKDYVKKNKK…RLNIAITRIE (76 aa)).

This sequence belongs to the universal ribosomal protein uS3 family. In terms of assembly, part of the 30S ribosomal subunit.

The protein resides in the plastid. It localises to the chloroplast. This is Small ribosomal subunit protein uS3c (rps3) from Phalaenopsis aphrodite subsp. formosana (Moth orchid).